The primary structure comprises 82 residues: Transcription elongation factor 1 homolog (82 aa).

Residues cysteine 26, cysteine 29, cysteine 50, and cysteine 53 each coordinate Zn(2+).

The protein belongs to the ELOF1 family.

The protein resides in the nucleus. In terms of biological role, transcription elongation factor implicated in the maintenance of proper chromatin structure in actively transcribed regions. The chain is Transcription elongation factor 1 homolog from Manduca sexta (Tobacco hawkmoth).